The primary structure comprises 388 residues: Succinate--CoA ligase [ADP-forming] subunit beta (388 aa).

The ATP-grasp domain maps to 9–244 (KEILRKFGVA…LDEEDPAEIE (236 aa)). ATP contacts are provided by residues lysine 46, 53 to 55 (GRG), glutamate 99, alanine 102, and glutamate 107. 2 residues coordinate Mg(2+): asparagine 199 and aspartate 213. Residues asparagine 264 and 321–323 (GIM) contribute to the substrate site.

Belongs to the succinate/malate CoA ligase beta subunit family. In terms of assembly, heterotetramer of two alpha and two beta subunits. Requires Mg(2+) as cofactor.

The catalysed reaction is succinate + ATP + CoA = succinyl-CoA + ADP + phosphate. The enzyme catalyses GTP + succinate + CoA = succinyl-CoA + GDP + phosphate. It participates in carbohydrate metabolism; tricarboxylic acid cycle; succinate from succinyl-CoA (ligase route): step 1/1. Succinyl-CoA synthetase functions in the citric acid cycle (TCA), coupling the hydrolysis of succinyl-CoA to the synthesis of either ATP or GTP and thus represents the only step of substrate-level phosphorylation in the TCA. The beta subunit provides nucleotide specificity of the enzyme and binds the substrate succinate, while the binding sites for coenzyme A and phosphate are found in the alpha subunit. The protein is Succinate--CoA ligase [ADP-forming] subunit beta of Burkholderia mallei (strain NCTC 10247).